Here is a 480-residue protein sequence, read N- to C-terminus: Wax ester synthase/diacylglycerol acyltransferase 7 (480 aa).

The Cytoplasmic segment spans residues 1-193 (MTYGEEEPVS…LRSIFTIGST (193 aa)). His135 functions as the Proton acceptor in the catalytic mechanism. A helical transmembrane segment spans residues 194-214 (MRLLWNTTIDMLLLLATVLFL). The Lumenal segment spans residues 215–329 (KDTKTPLKAG…VKDSKCRWGN (115 aa)). Residue Asn252 is glycosylated (N-linked (GlcNAc...) asparagine). The chain crosses the membrane as a helical span at residues 330 to 350 (YFSFIFLPFTIGLQTDPLVYL). At 351–365 (KMSKSMMARKKHSYH) the chain is on the cytoplasmic side. A helical membrane pass occupies residues 366-386 (AALVYFIIKIVLKVFGAKAAA). At 387–480 (ELFDRPVRNT…KASLCERGLL (94 aa)) the chain is on the lumenal side. An N-linked (GlcNAc...) asparagine glycan is attached at Asn395.

This sequence in the N-terminal section; belongs to the long-chain O-acyltransferase family. Expressed in roots, stems, leaves, flowers and siliques.

The protein resides in the cell membrane. It is found in the endoplasmic reticulum membrane. Its subcellular location is the golgi apparatus membrane. It catalyses the reaction an acyl-CoA + a 1,2-diacyl-sn-glycerol = a triacyl-sn-glycerol + CoA. The enzyme catalyses a long chain fatty alcohol + a fatty acyl-CoA = a wax ester + CoA. It functions in the pathway glycerolipid metabolism; triacylglycerol biosynthesis. It participates in lipid metabolism. Its function is as follows. Bifunctional wax ester synthase/diacylglycerol acyltransferase that uses acyl-CoAs with 14, 16 and 18 carbons as substrates, preferably in combination with 16:0ol alcohol. Involved in cuticular wax biosynthesis. This Arabidopsis thaliana (Mouse-ear cress) protein is Wax ester synthase/diacylglycerol acyltransferase 7.